The chain runs to 1044 residues: Sarcoplasmic/endoplasmic reticulum calcium ATPase 2 (1044 aa).

Residues 1 to 48 (MENAHTKTVEEVLGHFGVNESTGLSLEQVKKLKERWGSNELPAEEGKT) are Cytoplasmic-facing. S38 carries the post-translational modification Phosphoserine. The helical transmembrane segment at 49–69 (LLELVIEQFEDLLVRILLLAA) threads the bilayer. The Lumenal segment spans residues 70 to 89 (CISFVLAWFEEGEETITAFV). A helical transmembrane segment spans residues 90–110 (EPFVILLILVANAIVGVWQER). The Cytoplasmic segment spans residues 111–253 (NAENAIEALK…QERTPLQQKL (143 aa)). A helical membrane pass occupies residues 254–273 (DEFGEQLSKVISLICIAVWI). Over 274–295 (INIGHFNDPVHGGSWIRGAIYY) the chain is Lumenal. 3'-nitrotyrosine occurs at positions 294 and 295. The helical transmembrane segment at 296–313 (FKIAVALAVAAIPEGLPA) threads the bilayer. V304, A305, I307, and E309 together coordinate Ca(2+). Residues 314 to 756 (VITTCLALGT…EEGRAIYNNM (443 aa)) are Cytoplasmic-facing. D351 acts as the 4-aspartylphosphate intermediate in catalysis. Mg(2+) contacts are provided by D351 and T353. T353 serves as a coordination point for ATP. T441 is modified (phosphothreonine). 3 residues coordinate ATP: E442, R489, and K514. S531 carries the phosphoserine modification. Residue R559 coordinates ATP. The interaction with HAX1 stretch occupies residues 575-594 (MHLEDSANFIKYETNLTFVG). Position 580 is a phosphoserine (S580). ATP-binding residues include T624, G625, and D626. S661 and S663 each carry phosphoserine. ATP is bound by residues R677 and K683. D702 provides a ligand contact to Mg(2+). N705 contacts ATP. A helical transmembrane segment spans residues 757-776 (KQFIRYLISSNVGEVVCIFL). Residues N767 and E770 each contribute to the Ca(2+) site. Residues 777 to 786 (TAALGFPEAL) lie on the Lumenal side of the membrane. A helical membrane pass occupies residues 787–807 (IPVQLLWVNLVTDGLPATALG). An interaction with PLN region spans residues 787–807 (IPVQLLWVNLVTDGLPATALG). The interval 788 to 1044 (PVQLLWVNLV…DTNFSDMFWS (257 aa)) is interaction with TMEM64 and PDIA3. Ca(2+)-binding residues include N795, T798, and D799. The Cytoplasmic portion of the chain corresponds to 808–827 (FNPPDLDIMNKPPRNPKEPL). A helical membrane pass occupies residues 828-850 (ISGWLFFRYLAIGCYVGAATVGA). Over 851–896 (AAWWFIAADGGPRVSFYQLSHFLQCKEDNPDFDGVDCAIFESPYPM) the chain is Lumenal. C875 and C887 are joined by a disulfide. A helical transmembrane segment spans residues 897-916 (TMALSVLVTIEMCNALNSLS). E907 is a binding site for Ca(2+). Residues 917-929 (ENQSLLRMPPWEN) are Cytoplasmic-facing. Residues 930-948 (IWLVGSICLSMSLHFLILY) form a helical membrane-spanning segment. The tract at residues 931–942 (WLVGSICLSMSL) is interaction with PLN. Topologically, residues 949-963 (VEPLPLIFQITPLNL) are lumenal. A helical transmembrane segment spans residues 964–984 (TQWLMVLKISLPVILMDETLK). The Cytoplasmic segment spans residues 985–1044 (FVARNYLEQPGKECVQPATKSSCSLSACTDGISWPFVLLIMPLVVWVYSTDTNFSDMFWS).

The protein belongs to the cation transport ATPase (P-type) (TC 3.A.3) family. Type IIA subfamily. As to quaternary structure, interacts with sarcolipin (SLN); the interaction inhibits ATP2A2 Ca(2+) affinity. Interacts with phospholamban (PLN); the interaction inhibits ATP2A2 Ca(2+) affinity. Interacts with myoregulin (MRLN). Interacts with ARLN and ERLN; the interactions inhibit ATP2A2 Ca(2+) affinity. Interacts with STRIT1/DWORF; the interaction results in activation of ATP2A2. Interacts with the monomeric forms of SLN, PLN, ARLN, ERLN and STRI1/DWORF. Interacts with HAX1. Interacts with S100A8 and S100A9. Interacts with SLC35G1 and STIM1. Interacts with TMEM203. Interacts with TMEM64 and PDIA3. Interacts with TMX1. Interacts with TMX2. Interacts with VMP1; VMP1 competes with PLN and SLN to prevent them from forming an inhibitory complex with ATP2A2. Interacts with ULK1. Interacts with S100A1 in a Ca(2+)-dependent manner. Interacts with TUNAR. Interacts with FLVCR2; this interaction occurs in the absence of heme and promotes ATP2A2 proteasomal degradation; this complex is dissociated upon heme binding. Interacts with FNIP1. Interacts with TRAM2 (via C-terminus). It depends on Mg(2+) as a cofactor. In terms of processing, nitrated under oxidative stress. Nitration on the two tyrosine residues inhibits catalytic activity. Serotonylated on Gln residues by TGM2 in response to hypoxia, leading to its inactivation. In terms of tissue distribution, isoform 2 is highly expressed in heart and slow twitch skeletal muscle. Isoform 2 is widely expressed.

The protein resides in the endoplasmic reticulum membrane. It localises to the sarcoplasmic reticulum membrane. The catalysed reaction is Ca(2+)(in) + ATP + H2O = Ca(2+)(out) + ADP + phosphate + H(+). Its activity is regulated as follows. Has different conformational states with differential Ca2+ affinity. The E1 conformational state (active form) shows high Ca(2+) affinity, while the E2 state exhibits low Ca(2+) affinity. Binding of ATP allosterically increases its affinity for subsequent binding of Ca2+. Reversibly inhibited by phospholamban (PLN) at low calcium concentrations. PLN inhibits ATP2A2 Ca(2+) affinity by disrupting its allosteric activation by ATP. Inhibited by sarcolipin (SLN) and myoregulin (MRLN). The inhibition is blocked by VMP1. Enhanced by STRIT1/DWORF; STRIT1 increases activity by displacing sarcolipin (SLN), phospholamban (PLN) and myoregulin (MRLN). Stabilizes SERCA2 in its E2 state. Functionally, this magnesium-dependent enzyme catalyzes the hydrolysis of ATP coupled with the translocation of calcium from the cytosol to the sarcoplasmic reticulum lumen. Involved in autophagy in response to starvation. Upon interaction with VMP1 and activation, controls ER-isolation membrane contacts for autophagosome formation. Also modulates ER contacts with lipid droplets, mitochondria and endosomes. In coordination with FLVCR2 mediates heme-stimulated switching from mitochondrial ATP synthesis to thermogenesis. In terms of biological role, involved in the regulation of the contraction/relaxation cycle. Acts as a regulator of TNFSF11-mediated Ca(2+) signaling pathways via its interaction with TMEM64 which is critical for the TNFSF11-induced CREB1 activation and mitochondrial ROS generation necessary for proper osteoclast generation. Association between TMEM64 and SERCA2 in the ER leads to cytosolic Ca(2+) spiking for activation of NFATC1 and production of mitochondrial ROS, thereby triggering Ca(2+) signaling cascades that promote osteoclast differentiation and activation. The protein is Sarcoplasmic/endoplasmic reticulum calcium ATPase 2 of Mus musculus (Mouse).